Consider the following 236-residue polypeptide: EP300-interacting inhibitor of differentiation 2 (236 aa).

Positions 1–15 (MSQLPAVSSAPQTGA) are enriched in polar residues. The interval 1 to 102 (MSQLPAVSSA…REGPAAAAAS (102 aa)) is disordered. Low complexity-rich tracts occupy residues 32 to 68 (RALP…GRVA) and 75 to 102 (AAAA…AAAS). An omega-N-methylarginine mark is found at Arg63 and Arg79. Positions 170 to 190 (RIQELEERRRRFVEACRAREA) form a coiled coil.

In terms of assembly, heterodimer with EID2B. Interacts with the C-terminus of EP300. Interacts with HDAC1 and HDAC2. Interacts with SMAD2, SMAD4 and with the MH2 domain of SMAD3. In terms of tissue distribution, expressed in heart, brain, kidney and pancreas. Not detected in placenta.

It is found in the nucleus. Functionally, interacts with EP300 and acts as a repressor of MYOD-dependent transcription and muscle differentiation. Inhibits EP300 histone acetyltransferase activity. Acts as a repressor of TGFB/SMAD transcriptional responses. May act as a repressor of the TGFB/SMAD3-dependent signaling by selectively blocking formation of TGFB-induced SMAD3-SMAD4 complex. This chain is EP300-interacting inhibitor of differentiation 2, found in Mus musculus (Mouse).